The primary structure comprises 1661 residues: Cortactin-binding protein 2 (1661 aa).

5 disordered regions span residues Met1–Thr27, Glu206–Glu226, Thr329–Pro438, Asn454–Ser477, and Gln493–Lys612. The stretch at Lys124–Lys280 forms a coiled coil. Positions Gly383–Ser394 are enriched in low complexity. The segment covering Ser412–Ser426 has biased composition (polar residues). Positions Asn454–Gln466 are enriched in low complexity. The span at Ser467 to Ser477 shows a compositional bias: polar residues. Asymmetric dimethylarginine is present on Arg497. 5 ANK repeats span residues Gly707–Tyr737, Asp741–Ala770, Asn774–His803, Gly807–Val836, and Asp840–Gly869. The tract at residues Glu876 to Lys896 is disordered. An ANK 6 repeat occupies Glu910–Arg940. The disordered stretch occupies residues Gly1444–Glu1480. Ser1522 is subject to Phosphoserine. 2 disordered regions span residues Arg1555–Lys1597 and Pro1614–Lys1661. Positions Lys1580–Lys1597 are enriched in polar residues. Over residues Ser1622–Gln1636 the composition is skewed to low complexity. The span at Ser1643–Lys1661 shows a compositional bias: basic and acidic residues.

As to quaternary structure, interacts with CTTN/cortactin SH3 domain. Interacts with STRN, STRN4/zinedin and MOB4/phocein; this interactions mediate the association with the STRIPAK core complex and may regulate dendritic spine distribution of the STRIPAK complex in hippocampal neurons. Activation of glutamate receptors weakens the interaction with STRN and STRN4.

It is found in the cytoplasm. It localises to the cell cortex. Its subcellular location is the cell projection. The protein resides in the dendritic spine. Regulates the dendritic spine distribution of CTTN/cortactin in hippocampal neurons, and thus controls dendritic spinogenesis and dendritic spine maintenance. Associates with the striatin-interacting phosphatase and kinase (STRIPAK) core complex to regulate dendritic spine distribution of the STRIPAK complex in hippocampal neurons. This is Cortactin-binding protein 2 (CTTNBP2) from Loxodonta africana (African elephant).